The sequence spans 449 residues: Tubulin alpha-B chain (449 aa).

GTP contacts are provided by Q11, E71, S140, G144, T145, T179, N206, and N228. A Mg(2+)-binding site is contributed by E71. The active site involves E254.

It belongs to the tubulin family. Dimer of alpha and beta chains. A typical microtubule is a hollow water-filled tube with an outer diameter of 25 nm and an inner diameter of 15 nM. Alpha-beta heterodimers associate head-to-tail to form protofilaments running lengthwise along the microtubule wall with the beta-tubulin subunit facing the microtubule plus end conferring a structural polarity. Microtubules usually have 13 protofilaments but different protofilament numbers can be found in some organisms and specialized cells. Mg(2+) is required as a cofactor.

The protein localises to the cytoplasm. It localises to the cytoskeleton. The enzyme catalyses GTP + H2O = GDP + phosphate + H(+). Its function is as follows. Tubulin is the major constituent of microtubules, a cylinder consisting of laterally associated linear protofilaments composed of alpha- and beta-tubulin heterodimers. Microtubules grow by the addition of GTP-tubulin dimers to the microtubule end, where a stabilizing cap forms. Below the cap, tubulin dimers are in GDP-bound state, owing to GTPase activity of alpha-tubulin. The polypeptide is Tubulin alpha-B chain (tba-2) (Neurospora crassa (strain ATCC 24698 / 74-OR23-1A / CBS 708.71 / DSM 1257 / FGSC 987)).